Reading from the N-terminus, the 244-residue chain is uncharacterized protein (244 aa).

Residues 30-49 are disordered; it reads RETNESPKSQNPSEEATTVN. A compositionally biased stretch (polar residues) spans 35 to 49; sequence SPKSQNPSEEATTVN. The next 4 membrane-spanning stretches (helical) occupy residues 96 to 116, 128 to 148, 171 to 191, and 194 to 214; these read LWGT…LSNS, LLFI…FGLF, GFFI…TIAF, and FVTI…HPLS. The tract at residues 224 to 244 is disordered; that stretch reads QLDGSGERKTDSSLVHQNPPN. A compositionally biased stretch (polar residues) spans 235 to 244; the sequence is SSLVHQNPPN.

It localises to the nucleus membrane. This is an uncharacterized protein from Schizosaccharomyces pombe (strain 972 / ATCC 24843) (Fission yeast).